Consider the following 103-residue polypeptide: Co-chaperonin GroES (103 aa).

Belongs to the GroES chaperonin family. In terms of assembly, heptamer of 7 subunits arranged in a ring. Interacts with the chaperonin GroEL.

The protein localises to the cytoplasm. Together with the chaperonin GroEL, plays an essential role in assisting protein folding. The GroEL-GroES system forms a nano-cage that allows encapsulation of the non-native substrate proteins and provides a physical environment optimized to promote and accelerate protein folding. GroES binds to the apical surface of the GroEL ring, thereby capping the opening of the GroEL channel. The chain is Co-chaperonin GroES from Nostoc sp. (strain PCC 7120 / SAG 25.82 / UTEX 2576).